Reading from the N-terminus, the 106-residue chain is Biogenesis of lysosome-related organelles complex 1 subunit 4 (106 aa).

Positions 53-106 form a coiled coil; that stretch reads THSEGLSEQLKMTEKNILEMENLFDQIDQLCLFVQKAKSDLDKLEKLYNVVDRQ.

This sequence belongs to the BLOC1S4 family. In terms of assembly, component of the biogenesis of lysosome-related organelles complex-1 (BLOC-1) composed at least of blos-1, blos-2, blos-4, dsbn-1, glo-2, mutd-1 and snpn-1. Interacts with glo-2.

In terms of biological role, component of the biogenesis of lysosome-related organelles complex-1 (BLOC-1) involved in gut granule biogenesis. This is Biogenesis of lysosome-related organelles complex 1 subunit 4 (blos-4) from Caenorhabditis elegans.